A 460-amino-acid chain; its full sequence is Phosphoglucomutase (460 aa).

Ser103 (phosphoserine intermediate) is an active-site residue. Ser103 lines the Mg(2+) pocket. Substrate is bound by residues Ser103–His104 and Lys113. Mg(2+) is bound by residues Asp239, Asp241, and Asp243. Substrate-binding positions include Asp243–Arg244, Thr303, and Glu322–Ser324.

The protein belongs to the phosphohexose mutase family. It depends on Mg(2+) as a cofactor.

Its subcellular location is the cytoplasm. It catalyses the reaction alpha-D-glucose 1-phosphate = alpha-D-glucose 6-phosphate. This enzyme participates in both the breakdown and synthesis of glucose. This Neisseria gonorrhoeae protein is Phosphoglucomutase (pgm).